An 800-amino-acid chain; its full sequence is Heterogeneous nuclear ribonucleoprotein U (800 aa).

Ser2 bears the N-acetylserine mark. Ser4 bears the Phosphoserine mark. The SAP domain maps to 8–42 (VKKLKVSELKEELKKRRLSDKGLKADLMDRLQAAL). 2 positions are modified to N6-acetyllysine: Lys17 and Lys21. Residues 41–257 (ALDNEAGGRP…PQPPVEEEDE (217 aa)) are disordered. At Ser58 the chain carries Phosphoserine. 2 stretches are compositionally biased toward low complexity: residues 71–80 (AGLEQEAAAG) and 103–113 (ENGAAGAADAG). 2 stretches are compositionally biased toward acidic residues: residues 114–128 (AMEE…ENGD) and 134–147 (EGED…EGAG). Positions 153-173 (GEQQSQPPAAAAQQQPSQQRG) are enriched in low complexity. At Lys181 the chain carries N6-acetyllysine. Residue Ser182 is modified to ADP-ribosylserine. Residues 194-205 (APPGARQGQQQA) show a composition bias toward low complexity. Positions 209-242 (GKTEQKGGDKKRGVKRPREDHGRGYFEYIEENKY) are enriched in basic and acidic residues. A Citrulline modification is found at Arg231. Lys241 carries the N6-acetyllysine; alternate modification. Lys241 is covalently cross-linked (Glycyl lysine isopeptide (Lys-Gly) (interchain with G-Cter in SUMO1); alternate). Residue Lys241 forms a Glycyl lysine isopeptide (Lys-Gly) (interchain with G-Cter in SUMO2); alternate linkage. Residue Tyr242 is modified to Phosphotyrosine. 2 positions are modified to phosphoserine: Ser243 and Ser247. One can recognise a B30.2/SPRY domain in the interval 244–440 (RAKSPQPPVE…VEFNFGQKEK (197 aa)). Thr262 bears the Phosphothreonine mark. Lys328 is modified (N6-acetyllysine). An ATPase domain region spans residues 464-648 (PKGPEEKKDC…QKLLEQYKEE (185 aa)). Lys471 participates in a covalent cross-link: Glycyl lysine isopeptide (Lys-Gly) (interchain with G-Cter in SUMO2). An ATP-binding site is contributed by 480–487 (GLPGAGKT). Lys492 and Lys500 each carry N6-acetyllysine; alternate. Glycyl lysine isopeptide (Lys-Gly) (interchain with G-Cter in SUMO2); alternate cross-links involve residues Lys492 and Lys500. Thr508 carries the post-translational modification Phosphothreonine. Residue Lys512 forms a Glycyl lysine isopeptide (Lys-Gly) (interchain with G-Cter in SUMO2) linkage. Residue Lys527 is modified to N6-acetyllysine. Lys541 carries the N6-acetyllysine; alternate modification. Lys541 is covalently cross-linked (Glycyl lysine isopeptide (Lys-Gly) (interchain with G-Cter in SUMO2); alternate). Lys550 is covalently cross-linked (Glycyl lysine isopeptide (Lys-Gly) (interchain with G-Cter in SUMO2)). Thr558 is subject to Phosphothreonine. Glycyl lysine isopeptide (Lys-Gly) (interchain with G-Cter in SUMO2) cross-links involve residues Lys585 and Lys602. The interval 587 to 602 (EDYKQRTQKKAEVEGK) is actin-binding. The residue at position 611 (Lys611) is an N6-acetyllysine; alternate. Lys611 is covalently cross-linked (Glycyl lysine isopeptide (Lys-Gly) (interchain with G-Cter in SUMO2); alternate). Positions 626-653 (DEITYVELQKEEAQKLLEQYKEESKKAL) form a coiled coil. Residues Lys640 and Lys646 each participate in a glycyl lysine isopeptide (Lys-Gly) (interchain with G-Cter in SUMO2) cross-link. Positions 647 to 659 (EESKKALPPEKKQ) are enriched in basic and acidic residues. Residues 647 to 729 (EESKKALPPE…GSGGIGYPYP (83 aa)) are disordered. At Arg678 the chain carries Omega-N-methylarginine. Residues 686–704 (GGFNMRGGNFRGGAPGNRG) are compositionally biased toward gly residues. Residues 690-715 (MRGGNFRGGAPGNRGGYNRRGNMPQR) are RNA-binding RGG-box. 3 positions are modified to asymmetric dimethylarginine: Arg691, Arg696, and Arg703. Asymmetric dimethylarginine; alternate occurs at positions 709 and 715. An omega-N-methylarginine; alternate mark is found at Arg709 and Arg715. A compositionally biased stretch (gly residues) spans 715–725 (RGGGGGSGGIG). An asymmetric dimethylarginine mark is found at Arg730 and Arg737. The tract at residues 745–774 (NYNRGGMPNRGNYNQNFRGRGNNRGYKNQS) is disordered. Position 789 is an N6-acetyllysine; alternate (Lys789). A Glycyl lysine isopeptide (Lys-Gly) (interchain with G-Cter in SUMO2); alternate cross-link involves residue Lys789.

Oligomer (via ATPase domain and RNA-binding RGG-box region); oligomerization occurs upon ATP-binding in a chromatin-associated RNAs (caRNAs)- and transcription-dependent manner and is required for chromatin decompaction. ATP hydrolysis is required to cycle from an oligomeric to monomeric state to compact chromatin. Component of the coding region determinant (CRD)-mediated complex, composed of DHX9, HNRNPU, IGF2BP1, SYNCRIP and YBX1. Identified in the spliceosome C complex. Identified in a IGF2BP1-dependent mRNP granule complex containing untranslated mRNAs. Associates with heterogeneous nuclear ribonucleoprotein (hnRNP) particles. Associates (via middle region) with the C-terminal domain (CTD) RNA polymerase II (Pol II) holoenzyme; this association occurs in a RNA-independent manner. Associates (via middle region) with the core-TFIIH basal transcription factor complex; this association inhibits the CTD phosphorylation of RNA polymerase II holoenzyme by down-regulating TFIIH kinase activity. Associates with the telomerase holoenzyme complex. Associates with spindle microtubules (MTs) in a TPX2-dependent manner. Interacts (via C-terminus) with actin; this interaction is direct and mediates association with the phosphorylated CTD of RNA polymerase II and is disrupted in presence of the long non-coding H19 RNA. Interacts with AURKA. Interacts (via C-terminus) with CBX5; this interaction is, at least in part, RNA-dependent. Interacts with CR2. Interacts with CRY1. Interacts (via C-terminus) with EP300; this interaction enhances DNA-binding to nuclear scaffold/matrix attachment region (S/MAR) elements. Interacts with ERBB4. Interacts with GEMIN5. Interacts with IGF2BP1. Interacts with IGF2BP2 and IGF2BP3. Interacts with NCL; this interaction occurs during mitosis. Interacts (via C-terminus) with NR3C1 (via C-terminus). Interacts with PLK1; this interaction induces phosphorylation of HNRNPU at Ser-58 in mitosis. Interacts with POU3F4. Interacts with SMARCA4; this interaction occurs in embryonic stem cells and stimulates global Pol II-mediated transcription. Interacts (via C-terminus) with TOP2A; this interaction protects the topoisomerase TOP2A from degradation and positively regulates the relaxation of supercoiled DNA by TOP2A in a RNA-dependent manner. Interacts with TPX2; this interaction recruits HNRNPU to spindle microtubules (MTs). Interacts with UBQLN2. Interacts (via RNA-binding RGG-box region) with ZBTB7B; the interaction facilitates the recruitment of long non-coding RNA Blnc1 by ZBTB7B. Interacts with ERCC6. In terms of processing, cleaved at Asp-94 by CASP3 during T-cell apoptosis, resulting in a loss of DNA- and chromatin-binding activities. Extensively phosphorylated. Phosphorylated on Ser-58 by PLK1 and dephosphorylated by protein phosphatase 2A (PP2A) in mitosis. Post-translationally, arg-709 and Arg-715 are dimethylated, probably to asymmetric dimethylarginine. In terms of processing, citrullinated by PADI4.

The protein resides in the nucleus. Its subcellular location is the nucleus matrix. The protein localises to the chromosome. It is found in the nucleus speckle. It localises to the cytoplasm. The protein resides in the cytoskeleton. Its subcellular location is the microtubule organizing center. The protein localises to the centrosome. It is found in the centromere. It localises to the kinetochore. The protein resides in the spindle. Its subcellular location is the spindle pole. The protein localises to the midbody. It is found in the cell surface. It localises to the cytoplasmic granule. Its function is as follows. DNA- and RNA-binding protein involved in several cellular processes such as nuclear chromatin organization, telomere-length regulation, transcription, mRNA alternative splicing and stability, Xist-mediated transcriptional silencing and mitotic cell progression. Plays a role in the regulation of interphase large-scale gene-rich chromatin organization through chromatin-associated RNAs (caRNAs) in a transcription-dependent manner, and thereby maintains genomic stability. Required for the localization of the long non-coding Xist RNA on the inactive chromosome X (Xi) and the subsequent initiation and maintenance of X-linked transcriptional gene silencing during X-inactivation. Plays a role as a RNA polymerase II (Pol II) holoenzyme transcription regulator. Promotes transcription initiation by direct association with the core-TFIIH basal transcription factor complex for the assembly of a functional pre-initiation complex with Pol II in a actin-dependent manner. Blocks Pol II transcription elongation activity by inhibiting the C-terminal domain (CTD) phosphorylation of Pol II and dissociates from Pol II pre-initiation complex prior to productive transcription elongation. Positively regulates CBX5-induced transcriptional gene silencing and retention of CBX5 in the nucleus. Negatively regulates glucocorticoid-mediated transcriptional activation. Key regulator of transcription initiation and elongation in embryonic stem cells upon leukemia inhibitory factor (LIF) signaling. Involved in the long non-coding RNA H19-mediated Pol II transcriptional repression. Participates in the circadian regulation of the core clock component BMAL1 transcription. Plays a role in the regulation of telomere length. Plays a role as a global pre-mRNA alternative splicing modulator by regulating U2 small nuclear ribonucleoprotein (snRNP) biogenesis. Plays a role in mRNA stability. Component of the CRD-mediated complex that promotes MYC mRNA stabilization. Enhances the expression of specific genes, such as tumor necrosis factor TNFA, by regulating mRNA stability, possibly through binding to the 3'-untranslated region (UTR). Plays a role in mitotic cell cycle regulation. Involved in the formation of stable mitotic spindle microtubules (MTs) attachment to kinetochore, spindle organization and chromosome congression. Phosphorylation at Ser-58 by PLK1 is required for chromosome alignement and segregation and progression through mitosis. Also contributes to the targeting of AURKA to mitotic spindle MTs. Binds to double- and single-stranded DNA and RNA, poly(A), poly(C) and poly(G) oligoribonucleotides. Binds to chromatin-associated RNAs (caRNAs). Associates with chromatin to scaffold/matrix attachment region (S/MAR) elements in a chromatin-associated RNAs (caRNAs)-dependent manner. Binds (via RNA-binding RGG-box region) to the long non-coding Xist RNA; this binding is direct and bridges the Xist RNA and the inactive chromosome X (Xi). Binds the long non-coding H19 RNA. Binds to SMN1/2 pre-mRNAs at G/U-rich regions. Binds to small nuclear RNAs (snRNAs). Binds to the 3'-UTR of TNFA mRNA. Also negatively regulates embryonic stem cell differentiation upon LIF signaling. Required for embryonic development. Binds to brown fat long non-coding RNA 1 (Blnc1); facilitates the recruitment of Blnc1 by ZBTB7B required to drive brown and beige fat development and thermogenesis. The polypeptide is Heterogeneous nuclear ribonucleoprotein U (Mus musculus (Mouse)).